Reading from the N-terminus, the 419-residue chain is WD repeat-containing protein JIP5 (419 aa).

WD repeat units lie at residues 4 to 45, 66 to 105, 108 to 147, 180 to 220, 224 to 263, 268 to 308, and 351 to 390; these read ALSS…HNQS, PSHK…VKAR, RAHE…EGDA, DQED…KGVE, DQED…LDHA, GHPS…GIVG, and DAAE…QPPP. The interval 172–192 is disordered; sequence DPPRSKKKDQEDDLKRKRDEE. The interval 372–408 is disordered; the sequence is SADGSDESAGESDVMQPPPATKRRTAKSKAGKKSVHD. The segment covering 392 to 404 has biased composition (basic residues); that stretch reads TKRRTAKSKAGKK.

It belongs to the WD repeat WDR55 family.

Its subcellular location is the nucleus. It localises to the nucleolus. The polypeptide is WD repeat-containing protein JIP5 (JIP5) (Malassezia globosa (strain ATCC MYA-4612 / CBS 7966) (Dandruff-associated fungus)).